Here is an 807-residue protein sequence, read N- to C-terminus: Glycerol-3-phosphate acyltransferase (807 aa).

Positions 305–310 match the HXXXXD motif motif; sequence CHRSHM.

Belongs to the GPAT/DAPAT family.

Its subcellular location is the cell inner membrane. It catalyses the reaction sn-glycerol 3-phosphate + an acyl-CoA = a 1-acyl-sn-glycero-3-phosphate + CoA. It participates in phospholipid metabolism; CDP-diacylglycerol biosynthesis; CDP-diacylglycerol from sn-glycerol 3-phosphate: step 1/3. The polypeptide is Glycerol-3-phosphate acyltransferase (Aliivibrio fischeri (strain ATCC 700601 / ES114) (Vibrio fischeri)).